Here is a 377-residue protein sequence, read N- to C-terminus: Lactosylceramide 1,3-N-acetyl-beta-D-glucosaminyltransferase B (377 aa).

The Cytoplasmic segment spans residues 1 to 13 (MLISARRLRRCQS). A helical; Signal-anchor for type II membrane protein membrane pass occupies residues 14–30 (LQLLASCFVLSLMALLV). Residues 31–377 (QEDNSLVNHV…DTYPCSAAWS (347 aa)) lie on the Lumenal side of the membrane. Residues Asn56, Asn167, and Asn275 are each glycosylated (N-linked (GlcNAc...) asparagine).

The protein belongs to the glycosyltransferase 31 family.

It is found in the golgi apparatus membrane. It carries out the reaction a beta-D-Gal-(1-&gt;4)-beta-D-Glc-(1&lt;-&gt;1)-Cer(d18:1(4E)) + UDP-N-acetyl-alpha-D-glucosamine = a beta-D-GlcNAc-(1-&gt;3)-beta-D-Gal-(1-&gt;4)-beta-D-Glc-(1&lt;-&gt;1)-Cer(d18:1(4E)) + UDP + H(+). The catalysed reaction is a neolactoside nLc4Cer(d18:1(4E)) + UDP-N-acetyl-alpha-D-glucosamine = a neolactoside IV(3)-beta-GlcNAc-nLc4Cer(d18:1(4E)) + UDP + H(+). It participates in protein modification; protein glycosylation. In terms of biological role, beta-1,3-N-acetylglucosaminyltransferase that plays a key role in the synthesis of lacto- or neolacto-series carbohydrate chains on glycolipids. The protein is Lactosylceramide 1,3-N-acetyl-beta-D-glucosaminyltransferase B (b3gnt5-b) of Xenopus laevis (African clawed frog).